We begin with the raw amino-acid sequence, 609 residues long: Arginine--tRNA ligase (609 aa).

The 'HIGH' region signature appears at 114-124 (VNPNKELHVGH).

The protein belongs to the class-I aminoacyl-tRNA synthetase family. As to quaternary structure, monomer.

It is found in the cytoplasm. The enzyme catalyses tRNA(Arg) + L-arginine + ATP = L-arginyl-tRNA(Arg) + AMP + diphosphate. This Deinococcus radiodurans (strain ATCC 13939 / DSM 20539 / JCM 16871 / CCUG 27074 / LMG 4051 / NBRC 15346 / NCIMB 9279 / VKM B-1422 / R1) protein is Arginine--tRNA ligase.